The sequence spans 151 residues: MTVKGCLCLAFGVTLIVIVGVVVAMGVALSKGRAPGDDLVTLALNELAGDEDVVGRLSDAGAANLTGLLRGLILDHLSRNSSGLVAADALYERVLTRLRLDIFVFNGLVAAFNGFWLSFIIMYTCARTVRSGKKVAPAPIHSPPTMMSPYI.

The next 2 helical transmembrane spans lie at Leu-7–Val-23 and Gly-107–Tyr-123.

The protein localises to the membrane. This Ictalurid herpesvirus 1 (strain Auburn) (IcHV-1) protein is Putative membrane protein ORF10 (ORF10).